Here is a 342-residue protein sequence, read N- to C-terminus: Serpentine receptor class beta-16 (342 aa).

Over 1–22 the chain is Extracellular; that stretch reads MDRELIEICKENSATAFSVGYQ. The chain crosses the membrane as a helical span at residues 23-43; sequence IVYLIYVVLSVTSIFTCSYFI. Topologically, residues 44-61 are cytoplasmic; the sequence is KTFIWNSTFHPNFKLLLT. The chain crosses the membrane as a helical span at residues 62-82; it reads MYFFAAIFHSFLFTASYLMMI. At 83-102 the chain is on the extracellular side; it reads ERFLDYQTDCDIHVSMVPYA. A helical transmembrane segment spans residues 103–123; sequence IVHSSIACCLFCGMLTQVFMV. The Cytoplasmic portion of the chain corresponds to 124-141; that stretch reads IERLLATIKIESYEHNTS. Residues 142 to 162 traverse the membrane as a helical segment; the sequence is FWHILAYLFFCIVLPLSLLVW. Topologically, residues 163-187 are extracellular; that stretch reads AYQDADYNSPVITAISPPKGVEIRL. Residues 188–208 traverse the membrane as a helical segment; it reads NILYIFCFFLAILALILLQVV. Over 209 to 237 the chain is Cytoplasmic; sequence RFVNKRRESRIEISLSGRFQIVENIDTTT. The chain crosses the membrane as a helical span at residues 238–258; that stretch reads FISSILIINMIMSVIYIVGTF. Topologically, residues 259–274 are extracellular; sequence TLRNFQFDAFINNQPA. Residues 275-295 traverse the membrane as a helical segment; sequence LATVKTIFYLHPLFSFLMPLI. The Cytoplasmic portion of the chain corresponds to 296–342; that stretch reads SSYHLSKMRERRVKRREHLMAIKTKGREGSDAYNQLLHDQWTQHFLK.

This sequence belongs to the nematode receptor-like protein srb family. As to expression, expressed throughout the nervous system, in pharyngeal muscle, hermaphrodite vulval muscles and in the male tail. Not expressed in male somatic gonads or sperm.

It localises to the cell membrane. The protein resides in the perikaryon. It is found in the cell projection. The protein localises to the dendrite. G-protein coupled receptor. Plays a role in the navigational capacity of sperm and promotes the targeting of sperm derived from males to the fertilization site in the uterus of hermaphrodites. The polypeptide is Serpentine receptor class beta-16 (Caenorhabditis elegans).